The following is a 122-amino-acid chain: Large ribosomal subunit protein uL14 (122 aa).

Belongs to the universal ribosomal protein uL14 family. Part of the 50S ribosomal subunit. Forms a cluster with proteins L3 and L19. In the 70S ribosome, L14 and L19 interact and together make contacts with the 16S rRNA in bridges B5 and B8.

Binds to 23S rRNA. Forms part of two intersubunit bridges in the 70S ribosome. This Lawsonia intracellularis (strain PHE/MN1-00) protein is Large ribosomal subunit protein uL14.